Reading from the N-terminus, the 324-residue chain is Polycomb complex protein BMI-1-B (324 aa).

The RING-type zinc finger occupies 18–57 (CVLCGGYFIDATTIVECLHSFCKMCIVRYLETSKYCPICD). Residues 81-95 (KLVPGLFKNEMKRRR) carry the Nuclear localization signal motif. The interval 232 to 324 (IKLSSPRNDM…TSHNGSNSLG (93 aa)) is disordered. Residues 256–279 (DKPNSPSIVAAPSTSSSMPSPNTP) show a composition bias toward low complexity. Polar residues-rich tracts occupy residues 280 to 295 (VQST…TING) and 303 to 324 (NGQT…NSLG).

As to quaternary structure, component of a PRC1-like complex. Homodimer. Interacts with cbx2.

The protein resides in the nucleus. Functionally, component of a Polycomb group (PcG) multiprotein PRC1-like complex, a complex class required to maintain the transcriptionally repressive state of many genes, including Hox genes, throughout development. PcG PRC1 complex acts via chromatin remodeling and modification of histones; it mediates monoubiquitination of histone H2A 'Lys-119', rendering chromatin heritably changed in its expressibility. In the PRC1 complex, it is required to stimulate the E3 ubiquitin-protein ligase activity of rnf2. The protein is Polycomb complex protein BMI-1-B (bmi1b) of Danio rerio (Zebrafish).